We begin with the raw amino-acid sequence, 189 residues long: Peptidyl-tRNA hydrolase (189 aa).

A tRNA-binding site is contributed by tyrosine 14. Histidine 19 acts as the Proton acceptor in catalysis. 3 residues coordinate tRNA: tyrosine 64, asparagine 66, and asparagine 112.

The protein belongs to the PTH family. As to quaternary structure, monomer.

It is found in the cytoplasm. It catalyses the reaction an N-acyl-L-alpha-aminoacyl-tRNA + H2O = an N-acyl-L-amino acid + a tRNA + H(+). In terms of biological role, hydrolyzes ribosome-free peptidyl-tRNAs (with 1 or more amino acids incorporated), which drop off the ribosome during protein synthesis, or as a result of ribosome stalling. Catalyzes the release of premature peptidyl moieties from peptidyl-tRNA molecules trapped in stalled 50S ribosomal subunits, and thus maintains levels of free tRNAs and 50S ribosomes. The polypeptide is Peptidyl-tRNA hydrolase (Clostridium botulinum (strain Kyoto / Type A2)).